The sequence spans 92 residues: DNA/RNA-binding protein Alba (92 aa).

Lys11 is subject to N6-acetyllysine.

This sequence belongs to the histone-like Alba family. Acetylated. Acetylation at Lys-11 decreases DNA-binding affinity.

It is found in the cytoplasm. It localises to the chromosome. Binds double-stranded DNA tightly but without sequence specificity. Involved in DNA compaction. The polypeptide is DNA/RNA-binding protein Alba (Pyrobaculum neutrophilum (strain DSM 2338 / JCM 9278 / NBRC 100436 / V24Sta) (Thermoproteus neutrophilus)).